A 121-amino-acid polypeptide reads, in one-letter code: Large ribosomal subunit protein bL12 (121 aa).

It belongs to the bacterial ribosomal protein bL12 family. As to quaternary structure, homodimer. Part of the ribosomal stalk of the 50S ribosomal subunit. Forms a multimeric L10(L12)X complex, where L10 forms an elongated spine to which 2 to 4 L12 dimers bind in a sequential fashion. Binds GTP-bound translation factors.

In terms of biological role, forms part of the ribosomal stalk which helps the ribosome interact with GTP-bound translation factors. Is thus essential for accurate translation. This chain is Large ribosomal subunit protein bL12, found in Shewanella baltica (strain OS223).